Consider the following 851-residue polypeptide: Leucine--tRNA ligase (851 aa).

Positions 51-61 (PYPSGDLHMGH) match the 'HIGH' region motif. Positions 615 to 619 (KMSKS) match the 'KMSKS' region motif. Lysine 618 is an ATP binding site.

The protein belongs to the class-I aminoacyl-tRNA synthetase family.

Its subcellular location is the cytoplasm. The enzyme catalyses tRNA(Leu) + L-leucine + ATP = L-leucyl-tRNA(Leu) + AMP + diphosphate. The protein is Leucine--tRNA ligase of Clavibacter michiganensis subsp. michiganensis (strain NCPPB 382).